Consider the following 269-residue polypeptide: Indole-3-glycerol phosphate synthase 1 (269 aa).

This sequence belongs to the TrpC family.

The catalysed reaction is 1-(2-carboxyphenylamino)-1-deoxy-D-ribulose 5-phosphate + H(+) = (1S,2R)-1-C-(indol-3-yl)glycerol 3-phosphate + CO2 + H2O. It functions in the pathway amino-acid biosynthesis; L-tryptophan biosynthesis; L-tryptophan from chorismate: step 4/5. The polypeptide is Indole-3-glycerol phosphate synthase 1 (trpC1) (Streptomyces coelicolor (strain ATCC BAA-471 / A3(2) / M145)).